The following is a 209-amino-acid chain: Vacuolar protein sorting-associated protein 28 homolog 1 (209 aa).

The VPS28 N-terminal domain occupies 1–99; sequence MEVKLWNDKR…TSGVPATVEH (99 aa). Residues 109 to 205 enclose the VPS28 C-terminal domain; it reads SSASVVAECV…SYNSFMAALP (97 aa).

This sequence belongs to the VPS28 family. As to quaternary structure, component of the endosomal sorting required for transport complex I (ESCRT-I), composed of ELC, VPS28 and VPS37. Interacts with ELC.

Its subcellular location is the endosome. Its function is as follows. Component of the ESCRT-I complex (endosomal sorting complex required for transport I), a regulator of vesicular trafficking process. Required for the sorting of endocytic ubiquitinated cargos into multivesicular bodies (MVBs). Mediates the association to the ESCRT-0 complex. The protein is Vacuolar protein sorting-associated protein 28 homolog 1 (VPS28-1) of Arabidopsis thaliana (Mouse-ear cress).